A 536-amino-acid polypeptide reads, in one-letter code: Proto-oncogene tyrosine-protein kinase Yrk (536 aa).

Gly-2 carries N-myristoyl glycine lipidation. S-palmitoyl cysteine attachment occurs at residues Cys-3 and Cys-6. Residues 10 to 36 (ISGKGQGGSGTGTPAHPPSQYDPDPTQ) form a disordered region. One can recognise an SH3 domain in the interval 81 to 142 (GGVTLFIALY…PSNYVAPVDS (62 aa)). Positions 148–245 (WYFGKIGRKD…GLCCRLAVPC (98 aa)) constitute an SH2 domain. In terms of domain architecture, Protein kinase spans 270-523 (LQLLQKLGNG…YLQSFLEDYF (254 aa)). ATP-binding positions include 276–284 (LGNGQFGEV) and Lys-298. Residue Asp-389 is the Proton acceptor of the active site. Tyr-419 is modified (phosphotyrosine; by autocatalysis). Tyr-530 is modified (phosphotyrosine).

The protein belongs to the protein kinase superfamily. Tyr protein kinase family. SRC subfamily. Post-translationally, phosphorylated. There are elevated levels of this protein in neural and hematopoietic tissues.

The enzyme catalyses L-tyrosyl-[protein] + ATP = O-phospho-L-tyrosyl-[protein] + ADP + H(+). Functionally, may participate in signaling pathways. The protein is Proto-oncogene tyrosine-protein kinase Yrk (YRK) of Gallus gallus (Chicken).